Here is a 259-residue protein sequence, read N- to C-terminus: MFARLAILLYAIVSYAAFTVSFLYALGFVGNYVVPKSIDVGSPTNLGEAILVNLLLMSLFAIQHSVMARPAFKRWWAKFLPLACQRSTYVLLSSLILLLLFWQWRPIPTPVWQTSGIAAWLLIGVHWLGWLIAFASTHMIDHFDLFGLRQAFVAFRGTEISGQSFRTPLLYKIVRHPLMLGFLLAFWATPAMTAGHLLFALANTAYILVALQFEERDLIAEFGATYQDYRRRVPMLVPRLFARRRTDDRKSPRPVGAPR.

The next 5 membrane-spanning stretches (helical) occupy residues 5–25, 46–66, 88–108, 115–135, and 182–202; these read LAILLYAIVSYAAFTVSFLYA, LGEAILVNLLLMSLFAIQHSV, TYVLLSSLILLLLFWQWRPIP, SGIAAWLLIGVHWLGWLIAFA, and FLLAFWATPAMTAGHLLFALA.

This sequence belongs to the nurim family.

The protein resides in the membrane. It catalyses the reaction methanethiol + S-adenosyl-L-methionine = dimethyl sulfide + S-adenosyl-L-homocysteine + H(+). In terms of biological role, catalyzes the methylation of methanethiol (MeSH) to yield dimethylsulphide (DMS). This chain is Methanethiol S-methyltransferase 2, found in Bradyrhizobium diazoefficiens (strain JCM 10833 / BCRC 13528 / IAM 13628 / NBRC 14792 / USDA 110).